Here is a 156-residue protein sequence, read N- to C-terminus: Acyl carrier protein, mitochondrial (156 aa).

Residues 1–68 constitute a mitochondrion transit peptide; sequence MASRVLSAYV…GRVTQLCRQY (68 aa). The region spanning 77 to 152 is the Carrier domain; sequence EGIQDRVLYV…EIVDYIADKK (76 aa). Residue Lys-88 is modified to N6-acetyllysine. Ser-112 is modified (O-(pantetheine 4'-phosphoryl)serine).

It belongs to the acyl carrier protein (ACP) family. In terms of assembly, mammalian complex I is composed of 45 different subunits. Interacts with ETFRF1. Identified in a complex composed of MALSU1, MIEF1 upstream open reading frame protein and NDUFAB1; within the trimeric complex, MIEF1 upstream open reading frame protein functions as a bridging scaffold that interacts with MALSU1 on one side, and with NDUFAB1 on the other side. The complex interacts with the mitochondrial large ribosomal subunit. Interacts with alpha-1-microglobulin chain; this interaction is required for the maintenance of mitochondrial redox homeostasis. Component of the mitochondrial core iron-sulfur cluster (ISC) complex composed of NFS1, LYRM4, NDUFAB1, ISCU, FXN, and FDX2; this complex is a heterohexamer containing two copies of each monomer. Component of the cyteine desulfurase complex composed of NFS1, LYRM4 and NDUFAB1; this complex contributes to the stability and cysteine desulfurase activity of NFS1. Post-translationally, phosphopantetheinylation at Ser-112 is essential for interactions with LYR motif-containing proteins.

It is found in the mitochondrion. Functionally, carrier of the growing fatty acid chain in fatty acid biosynthesis. Accessory and non-catalytic subunit of the mitochondrial membrane respiratory chain NADH dehydrogenase (Complex I), which functions in the transfer of electrons from NADH to the respiratory chain. Accessory protein, of the core iron-sulfur cluster (ISC) assembly complex, that regulates, in association with LYRM4, the stability and the cysteine desulfurase activity of NFS1 and participates in the [2Fe-2S] clusters assembly on the scaffolding protein ISCU. The core iron-sulfur cluster (ISC) assembly complex is involved in the de novo synthesis of a [2Fe-2S] cluster, the first step of the mitochondrial iron-sulfur protein biogenesis. This process is initiated by the cysteine desulfurase complex (NFS1:LYRM4:NDUFAB1) that produces persulfide which is delivered on the scaffold protein ISCU in a FXN-dependent manner. Then this complex is stabilized by FDX2 which provides reducing equivalents to accomplish the [2Fe-2S] cluster assembly. Finally, the [2Fe-2S] cluster is transferred from ISCU to chaperone proteins, including HSCB, HSPA9 and GLRX5. This Gorilla gorilla gorilla (Western lowland gorilla) protein is Acyl carrier protein, mitochondrial.